The sequence spans 199 residues: Pyridoxal 5'-phosphate synthase subunit PdxT (199 aa).

Residue 49–51 coordinates L-glutamine; it reads GES. Cysteine 81 serves as the catalytic Nucleophile. L-glutamine is bound by residues arginine 110 and 139-140; that span reads IR. Residues histidine 175 and glutamate 177 each act as charge relay system in the active site.

Belongs to the glutaminase PdxT/SNO family. In the presence of PdxS, forms a dodecamer of heterodimers. Only shows activity in the heterodimer.

It catalyses the reaction aldehydo-D-ribose 5-phosphate + D-glyceraldehyde 3-phosphate + L-glutamine = pyridoxal 5'-phosphate + L-glutamate + phosphate + 3 H2O + H(+). It carries out the reaction L-glutamine + H2O = L-glutamate + NH4(+). Its pathway is cofactor biosynthesis; pyridoxal 5'-phosphate biosynthesis. Its function is as follows. Catalyzes the hydrolysis of glutamine to glutamate and ammonia as part of the biosynthesis of pyridoxal 5'-phosphate. The resulting ammonia molecule is channeled to the active site of PdxS. The chain is Pyridoxal 5'-phosphate synthase subunit PdxT from Frankia alni (strain DSM 45986 / CECT 9034 / ACN14a).